We begin with the raw amino-acid sequence, 118 residues long: Developmental pluripotency-associated protein 5A (118 aa).

The KH; atypical domain maps to 24-86 (PEVFQVQSLV…NNKIRAKWML (63 aa)).

Belongs to the KHDC1 family.

It is found in the cytoplasm. Its function is as follows. Involved in the maintenance of embryonic stem (ES) cell pluripotency. Dispensable for self-renewal of pluripotent ES cells and establishment of germ cells. Associates with specific target mRNAs. This is Developmental pluripotency-associated protein 5A (Dppa5a) from Mus musculus (Mouse).